A 332-amino-acid chain; its full sequence is Ribosomal RNA small subunit methyltransferase C (332 aa).

The protein belongs to the methyltransferase superfamily. RsmC family. As to quaternary structure, monomer.

The protein resides in the cytoplasm. The catalysed reaction is guanosine(1207) in 16S rRNA + S-adenosyl-L-methionine = N(2)-methylguanosine(1207) in 16S rRNA + S-adenosyl-L-homocysteine + H(+). Specifically methylates the guanine in position 1207 of 16S rRNA in the 30S particle. The sequence is that of Ribosomal RNA small subunit methyltransferase C from Stutzerimonas stutzeri (strain A1501) (Pseudomonas stutzeri).